Consider the following 659-residue polypeptide: Interferon-induced GTP-binding protein Mx3 (659 aa).

A Dynamin-type G domain is found at 65–338; that stretch reads DLALPAIAVI…LISHICKSLP (274 aa). The interval 75 to 82 is G1 motif; it reads GDQSSGKS. Residue 75-82 participates in GTP binding; that stretch reads GDQSSGKS. The tract at residues 100–102 is G2 motif; that stretch reads VTR. The tract at residues 176-179 is G3 motif; it reads DLPG. GTP-binding positions include 176–180 and 245–248; these read DLPGI and TKPD. Residues 245-248 are G4 motif; it reads TKPD. Residues 277–280 are G5 motif; that stretch reads KCRG. Residues 547 to 568 form a disordered region; the sequence is EAEEEERKHGKSRSAQSPNLQT. Residues 559-568 are compositionally biased toward polar residues; the sequence is RSAQSPNLQT. Residues 571 to 659 enclose the GED domain; the sequence is MDEIFQHLNA…AQRRLAKFPG (89 aa).

It belongs to the TRAFAC class dynamin-like GTPase superfamily. Dynamin/Fzo/YdjA family.

The protein resides in the cytoplasm. Its function is as follows. Does not show activity against influenza virus or VSV; although it only differs from Mx2 by 8 positions. The polypeptide is Interferon-induced GTP-binding protein Mx3 (Mx3) (Rattus norvegicus (Rat)).